Here is a 362-residue protein sequence, read N- to C-terminus: E3 ubiquitin-protein ligase rififylin (362 aa).

Residues 17 to 37 (ETPPPQGARTQAYSNPGYSSF) are disordered. Over residues 24–37 (ARTQAYSNPGYSSF) the composition is skewed to polar residues. An FYVE-type zinc finger spans residues 41–93 (TGSEPSCKACGVHFASTTRKQTCLDCKKNFCMTCSSQEGNGPRLCLLCLRFRA). One can recognise an SAP 1 domain in the interval 101–120 (LMKMKVKDLRDYLSLHDIST). A disordered region spans residues 162–183 (LTQPQSSTVPPTSPGLPSSPAQ). A phosphoserine mark is found at Ser225, Ser228, Ser231, and Ser239. The 15-residue stretch at 249–263 (IEGLTVRQLKEILAR) folds into the SAP 2 domain. The segment at 315–350 (CKICMDSPIDCVLLECGHMVTCTKCGKRMNECPICR) adopts an RING-type zinc-finger fold.

As to quaternary structure, interacts with CASP8 and CASP10. Interacts with RIPK1 (via protein kinase domain); involved in RIPK1 ubiquitination. Interacts with PRR5L. Interacts (via RING-type zinc finger) with p53/TP53; involved in p53/TP53 ubiquitination. Interacts (via RING-type zinc finger) with MDM2; the interaction stabilizes MDM2. Post-translationally, autoubiquitinated. Palmitoylated. In terms of processing, undergoes caspase-mediated cleavage upon death-receptor activation, by TNFSF10 for instance. May be mediated by the caspases CASP8 and CASP10 in a negative feedback loop. As to expression, ubiquitous. Detected in cerebrum, cerebellum, midbrain, brain stem, hippocampus, striatum, liver, heart, lung, kidney, muscle, spleen and testis.

The protein localises to the cytoplasm. It is found in the cytosol. The protein resides in the cell membrane. Its subcellular location is the recycling endosome membrane. It catalyses the reaction S-ubiquitinyl-[E2 ubiquitin-conjugating enzyme]-L-cysteine + [acceptor protein]-L-lysine = [E2 ubiquitin-conjugating enzyme]-L-cysteine + N(6)-ubiquitinyl-[acceptor protein]-L-lysine.. It participates in protein modification; protein ubiquitination. Its function is as follows. E3 ubiquitin-protein ligase that regulates several biological processes through the ubiquitin-mediated proteasomal degradation of various target proteins. Mediates 'Lys-48'-linked polyubiquitination of PRR5L and its subsequent proteasomal degradation thereby indirectly regulating cell migration through the mTORC2 complex. Also ubiquitinates the caspases CASP8 and CASP10, promoting their proteasomal degradation, to negatively regulate apoptosis downstream of death domain receptors. Also negatively regulates the tumor necrosis factor-mediated signaling pathway through targeting of RIPK1 to ubiquitin-mediated proteasomal degradation. Negatively regulates p53/TP53 through its direct ubiquitination and targeting to proteasomal degradation. Indirectly, may also negatively regulate p53/TP53 through ubiquitination and degradation of SFN. May also play a role in endocytic recycling. This Rattus norvegicus (Rat) protein is E3 ubiquitin-protein ligase rififylin.